A 200-amino-acid chain; its full sequence is MKAVVFAMVMAVSFNVFASGDESDKQALQSLLKQTQSLSAEFEQQVKDEQGEVLQTLSGTLKLKRPANLYWHTKEPDESVMVANGKKVWYYNPFVEQVTIYAQQDMVDDSPLLLVLNSNGNQWQNYNVSFRDNRYFVEHQTNGSKLELRFTDEKLTEITMVQAQGERTELMLNNVALNETISDEQFVFDVPADVDVDDQS.

Residues 1 to 18 (MKAVVFAMVMAVSFNVFA) form the signal peptide.

This sequence belongs to the LolA family. In terms of assembly, monomer.

It localises to the periplasm. Its function is as follows. Participates in the translocation of lipoproteins from the inner membrane to the outer membrane. Only forms a complex with a lipoprotein if the residue after the N-terminal Cys is not an aspartate (The Asp acts as a targeting signal to indicate that the lipoprotein should stay in the inner membrane). The protein is Outer-membrane lipoprotein carrier protein of Idiomarina loihiensis (strain ATCC BAA-735 / DSM 15497 / L2-TR).